The chain runs to 406 residues: Argininosuccinate synthase (406 aa).

Residues 11–19 and A38 contribute to the ATP site; that span reads AYSGGLDTS. Residues Y91 and S96 each coordinate L-citrulline. G121 lines the ATP pocket. L-aspartate is bound by residues T123, N127, and D128. L-citrulline is bound at residue N127. 5 residues coordinate L-citrulline: R131, S181, S190, E266, and Y278.

It belongs to the argininosuccinate synthase family. Type 1 subfamily. In terms of assembly, homotetramer.

Its subcellular location is the cytoplasm. It catalyses the reaction L-citrulline + L-aspartate + ATP = 2-(N(omega)-L-arginino)succinate + AMP + diphosphate + H(+). It participates in amino-acid biosynthesis; L-arginine biosynthesis; L-arginine from L-ornithine and carbamoyl phosphate: step 2/3. This is Argininosuccinate synthase from Campylobacter jejuni subsp. doylei (strain ATCC BAA-1458 / RM4099 / 269.97).